Reading from the N-terminus, the 396-residue chain is Probable intron-encoded endonuclease aI3 (396 aa).

Positions 51–90 are disordered; the sequence is TNNTNNNNPADSSSYESRMRAAGNSNSNSNSNSDSNINNT. Positions 74 to 90 are enriched in low complexity; the sequence is NSNSNSNSNSDSNINNT.

The protein belongs to the LAGLIDADG endonuclease family.

The protein localises to the mitochondrion. Functionally, mitochondrial DNA endonuclease involved in intron homing. This Kluyveromyces lactis (strain ATCC 8585 / CBS 2359 / DSM 70799 / NBRC 1267 / NRRL Y-1140 / WM37) (Yeast) protein is Probable intron-encoded endonuclease aI3 (aI3).